The sequence spans 320 residues: o-succinylbenzoate synthase (320 aa).

Residue Lys-133 is the Proton donor of the active site. The Mg(2+) site is built by Asp-161, Glu-190, and Asp-213. The active-site Proton acceptor is the Lys-235.

The protein belongs to the mandelate racemase/muconate lactonizing enzyme family. MenC type 1 subfamily. It depends on a divalent metal cation as a cofactor.

The catalysed reaction is (1R,6R)-6-hydroxy-2-succinyl-cyclohexa-2,4-diene-1-carboxylate = 2-succinylbenzoate + H2O. The protein operates within quinol/quinone metabolism; 1,4-dihydroxy-2-naphthoate biosynthesis; 1,4-dihydroxy-2-naphthoate from chorismate: step 4/7. It participates in quinol/quinone metabolism; menaquinone biosynthesis. In terms of biological role, converts 2-succinyl-6-hydroxy-2,4-cyclohexadiene-1-carboxylate (SHCHC) to 2-succinylbenzoate (OSB). The polypeptide is o-succinylbenzoate synthase (Salmonella paratyphi B (strain ATCC BAA-1250 / SPB7)).